Consider the following 277-residue polypeptide: 3-methyl-2-oxobutanoate hydroxymethyltransferase (277 aa).

Mg(2+) is bound by residues Asp53 and Asp96. 3-methyl-2-oxobutanoate is bound by residues 53 to 54 (DS), Asp96, and Lys126. Glu128 lines the Mg(2+) pocket. Glu195 serves as the catalytic Proton acceptor.

Belongs to the PanB family. Homodecamer; pentamer of dimers. The cofactor is Mg(2+).

It is found in the cytoplasm. It carries out the reaction 3-methyl-2-oxobutanoate + (6R)-5,10-methylene-5,6,7,8-tetrahydrofolate + H2O = 2-dehydropantoate + (6S)-5,6,7,8-tetrahydrofolate. It participates in cofactor biosynthesis; (R)-pantothenate biosynthesis; (R)-pantoate from 3-methyl-2-oxobutanoate: step 1/2. Its function is as follows. Catalyzes the reversible reaction in which hydroxymethyl group from 5,10-methylenetetrahydrofolate is transferred onto alpha-ketoisovalerate to form ketopantoate. This is 3-methyl-2-oxobutanoate hydroxymethyltransferase from Chlorobaculum tepidum (strain ATCC 49652 / DSM 12025 / NBRC 103806 / TLS) (Chlorobium tepidum).